Reading from the N-terminus, the 957-residue chain is MDGRRQHPHWAWSLLAVAVVAGGAAPTEASDNSPTSNSLEGGADTTAYWWGEWTKWTACSRSCGGGVTSQERHCLQQRRKSVPGTGNRTCVGTSKRYQLCRVQECPPDGRSFREEQCVSFNSRVYDGRAYQWKPLYPDDYVHISSKPCDLHCSTVDGQRQLTVPARDGTSCKLTDLRGVCVSGKCEPIGCDGVLFSTHTLDKCGVCQGDGSSCTHVTGNYRKGNNHLGYSLVTHIPAGARDIQIVERKKSADVLALADEAGFYFFNGNYKVDSPKNFNIAGTVVKYRRPMDVYETGIEYIVAQGPTNQGLNVMVWNQNGKSPSITFEYTLLQSPHMHHLPPVYYSFSEAASQSTESTERQELDSARLLGFMQHNGSLYRQTSSERLGLNSQLFQPPAPEVELGPSRGQESNEVCKQASGGVCEGPPRGKGFQDHNATGRAFSADKDDREISAHFTSHELLSANTISDQLLGTGSESEEFSLNETMNSIFAQGAPRSSPAESLYVDYEENEGPAAYLINGSYLELSSDRINTSSEAPFPNTSASPPNLAGNRTHKARTRPKARKQGVSPADMYRWKLSSHEPCSATCTTGVMSTYAMCVRYDGVEVDDSYCDALTRPEPVHEFCAGRECQPRWETSSWSECSRTCGEGHQFRIVRCWKMLSPGFDSSVYSDLCEATEAVRPEERKTCRNPACGPQWEMSEWSECTAKCGERSVVTRDIRCSEDEKLCDPSTKPVGEKNCTGPPCDRQWTVSDWGPCSGSCGQGRTIRHVYCKTSDGRVVPESQCQTETKPLAIHPCGDKNCPAHWLAQDWERCNTTCGRGVKKRLVLCMELANGKPQIRSGPECGLARKPPEESTCFERPCFKWYTSPWSECTKTCGVGVRMRDVKCYQGTDIVRGCDPLVKPVGRQACDLQPCPTEPPDDSCQDQPGTNCALAIKVNLCGHWYYSKACCRSCRPPHS.

Positions 1 to 29 (MDGRRQHPHWAWSLLAVAVVAGGAAPTEA) are cleaved as a signal peptide. Positions 47-106 (AYWWGEWTKWTACSRSCGGGVTSQERHCLQQRRKSVPGTGNRTCVGTSKRYQLCRVQECP) constitute a TSP type-1 1 domain. 3 disulfides stabilise this stretch: Cys59-Cys100, Cys63-Cys105, and Cys74-Cys90. N-linked (GlcNAc...) asparagine glycosylation is found at Asn87, Asn374, Asn435, Asn482, Asn518, Asn530, Asn539, and Asn550. Residues 532–544 (SSEAPFPNTSASP) are compositionally biased toward polar residues. Positions 532-568 (SSEAPFPNTSASPPNLAGNRTHKARTRPKARKQGVSP) are disordered. Over residues 551–563 (RTHKARTRPKARK) the composition is skewed to basic residues. TSP type-1 domains are found at residues 570-624 (DMYR…EFCA), 628-692 (CQPR…PACG), 694-742 (QWEM…TGPP), 743-801 (CDRQ…KNCP), 803-857 (HWLA…TCFE), and 859-914 (PCFK…QPCP). The N-linked (GlcNAc...) asparagine glycan is linked to Asn737. A glycan (N-linked (GlcNAc...) asparagine) is linked at Asn813. Residues 918 to 956 (PDDSCQDQPGTNCALAIKVNLCGHWYYSKACCRSCRPPH) form the PLAC domain.

As to quaternary structure, interacts with LTBP1. Post-translationally, glycosylated. Can be O-fucosylated by POFUT2 on a serine or a threonine residue found within the consensus sequence C1-X(2)-(S/T)-C2-G of the TSP type-1 repeat domains where C1 and C2 are the first and second cysteine residue of the repeat, respectively. Fucosylated repeats can then be further glycosylated by the addition of a beta-1,3-glucose residue by the glucosyltransferase, B3GALTL. Fucosylation mediates the efficient secretion of ADAMTS family members. Can also be C-glycosylated with one or two mannose molecules on tryptophan residues within the consensus sequence W-X-X-W of the TPRs, and N-glycosylated. These other glycosylations can also facilitate secretion.

The protein localises to the secreted. This is ADAMTS-like protein 2 (Adamtsl2) from Mus musculus (Mouse).